Consider the following 581-residue polypeptide: Potassium-transporting ATPase potassium-binding subunit (581 aa).

The next 12 membrane-spanning stretches (helical) occupy residues 2 to 22 (LQGWIQIALTILIIVAITPFF), 74 to 94 (AVIAILVFSLIAGQGVLPLNP), 135 to 155 (GLGYQMFTSAGTGLAVGIAFI), 177 to 197 (ILLPISIVGAIALIIAGVPET), 255 to 275 (LVQLVAILSIPTSLIYTYGVF), 284 to 304 (LIYLIPLGIFIGFTIITAIGE), 332 to 352 (WAQSALYAVTTTATMCGAVIA), 357 to 377 (LMPNGGFATLSNLFLQIVFGG), 381 to 401 (GTAYLFAYLILAVFVTGLMVG), 421 to 441 (FLILLVHPIAILIPGAIALAF), 501 to 521 (LSACFSLLAGRYIPIAALLLL), and 550 to 570 (AGVILILGALTFLPILALGPI).

This sequence belongs to the KdpA family. In terms of assembly, the system is composed of three essential subunits: KdpA, KdpB and KdpC.

It is found in the cell inner membrane. In terms of biological role, part of the high-affinity ATP-driven potassium transport (or Kdp) system, which catalyzes the hydrolysis of ATP coupled with the electrogenic transport of potassium into the cytoplasm. This subunit binds the periplasmic potassium ions and delivers the ions to the membrane domain of KdpB through an intramembrane tunnel. The protein is Potassium-transporting ATPase potassium-binding subunit of Microcystis aeruginosa (strain NIES-843 / IAM M-2473).